Reading from the N-terminus, the 399-residue chain is MSSSGQTQFRYTQTPSKVVHLRNLPWECVEEELIDLCKRFGKIVNTKSNVGANRNQAFVEFADLNQAISMVSYYASSSEPAQIRGKTVYIQYSNRHEIVNNQSPGDVPGNVLLVTFEGVESHEVSIDVIHLVFSAFGFVHKIATFEKAAGFQALVQFTDVETASAARSALDGRSIPRYLLSAHVGSCSLRMSYSAHTDLNIKFQSHRSRDYTNPYLPVNQTAMDGSMQPALGADGKKVESQSNVLLGLIENMQYAVTVDVLHTVFSAYGTVQKIAIFEKNGSTQALIQYSDIPTAAMAKEALEGHCIYDGGYCKLRLSYSRHTDLNVKAFSDKSRDYTLPDLSLLVAQKGPAVSGSAPPAGWQNPQAQSQYSGYGGSPYMYPSSDPNGASPSGQPPYYG.

Ser2 bears the N-acetylserine mark. RRM domains lie at 17–95, 109–196, and 242–322; these read KVVH…YSNR, GNVL…YSAH, and SNVL…YSRH. A disordered region spans residues 352–399; the sequence is AVSGSAPPAGWQNPQAQSQYSGYGGSPYMYPSSDPNGASPSGQPPYYG. Low complexity predominate over residues 365–384; sequence PQAQSQYSGYGGSPYMYPSS.

It is found in the nucleus. Plays a role in pre-mRNA splicing. Binds to the polypyrimidine tract of introns. May promote the binding of U2 snRNP to pre-mRNA. In Arabidopsis thaliana (Mouse-ear cress), this protein is Polypyrimidine tract-binding protein homolog 1 (PTB).